The primary structure comprises 450 residues: Divalent metal cation transporter MntH (450 aa).

The next 11 membrane-spanning stretches (helical) occupy residues leucine 34–isoleucine 54, alanine 61–leucine 81, isoleucine 108–valine 128, isoleucine 141–methionine 161, alanine 170–serine 190, glycine 212–leucine 232, isoleucine 263–phenylalanine 283, proline 305–alanine 325, serine 361–isoleucine 381, glutamine 383–leucine 403, and valine 422–valine 442.

This sequence belongs to the NRAMP family.

Its subcellular location is the cell membrane. Its function is as follows. H(+)-stimulated, divalent metal cation uptake system. This Staphylococcus aureus (strain bovine RF122 / ET3-1) protein is Divalent metal cation transporter MntH.